The following is a 71-amino-acid chain: Cell division protein ZapB (71 aa).

Residues 5 to 67 adopt a coiled-coil conformation; that stretch reads LEVLEQLESK…RALLGKMDQM (63 aa).

Belongs to the ZapB family. Homodimer. The ends of the coiled-coil dimer bind to each other, forming polymers. Interacts with FtsZ.

Its subcellular location is the cytoplasm. Functionally, non-essential, abundant cell division factor that is required for proper Z-ring formation. It is recruited early to the divisome by direct interaction with FtsZ, stimulating Z-ring assembly and thereby promoting cell division earlier in the cell cycle. Its recruitment to the Z-ring requires functional FtsA or ZipA. The polypeptide is Cell division protein ZapB (Aeromonas hydrophila subsp. hydrophila (strain ATCC 7966 / DSM 30187 / BCRC 13018 / CCUG 14551 / JCM 1027 / KCTC 2358 / NCIMB 9240 / NCTC 8049)).